The following is a 315-amino-acid chain: Ribosomal RNA small subunit methyltransferase H (315 aa).

S-adenosyl-L-methionine contacts are provided by residues 33-35 (GGH), Asp-52, Phe-84, Asp-106, and Gln-113. Residues 290-315 (PITASTSELENNNRSHSAKLRVAEKL) form a disordered region. Over residues 292–304 (TASTSELENNNRS) the composition is skewed to polar residues.

The protein belongs to the methyltransferase superfamily. RsmH family.

Its subcellular location is the cytoplasm. The enzyme catalyses cytidine(1402) in 16S rRNA + S-adenosyl-L-methionine = N(4)-methylcytidine(1402) in 16S rRNA + S-adenosyl-L-homocysteine + H(+). Its function is as follows. Specifically methylates the N4 position of cytidine in position 1402 (C1402) of 16S rRNA. This Lactobacillus helveticus (strain DPC 4571) protein is Ribosomal RNA small subunit methyltransferase H.